Consider the following 362-residue polypeptide: Transcription factor bHLH133 (362 aa).

The region spanning 209–258 is the bHLH domain; the sequence is LQVPSSQSTLKVRKEKLGGRIASLHQLVSPFGKTDTASVLSEAIGYIRFL.

This sequence belongs to the bHLH protein family. In terms of assembly, homodimer.

The protein localises to the nucleus. The chain is Transcription factor bHLH133 (BHLH133) from Arabidopsis thaliana (Mouse-ear cress).